The following is a 642-amino-acid chain: Chaperone protein HtpG (642 aa).

An a; substrate-binding region spans residues 1–350; the sequence is MATDTQKETL…SNDLSLNVSR (350 aa). The tract at residues 351-567 is b; it reads EILQNDHAVD…EYDMGLQMRR (217 aa). The interval 568 to 642 is c; the sequence is LLEQAGQKLP…MNKLIVQLSK (75 aa).

It belongs to the heat shock protein 90 family. In terms of assembly, homodimer.

The protein resides in the cytoplasm. Molecular chaperone. Has ATPase activity. The chain is Chaperone protein HtpG from Marinomonas sp. (strain MWYL1).